The sequence spans 217 residues: tRNA (guanine-N(7)-)-methyltransferase (217 aa).

4 residues coordinate S-adenosyl-L-methionine: glutamate 48, glutamate 73, asparagine 100, and aspartate 123. Aspartate 123 is a catalytic residue. Lysine 127 and aspartate 159 together coordinate substrate.

Belongs to the class I-like SAM-binding methyltransferase superfamily. TrmB family.

The catalysed reaction is guanosine(46) in tRNA + S-adenosyl-L-methionine = N(7)-methylguanosine(46) in tRNA + S-adenosyl-L-homocysteine. The protein operates within tRNA modification; N(7)-methylguanine-tRNA biosynthesis. In terms of biological role, catalyzes the formation of N(7)-methylguanine at position 46 (m7G46) in tRNA. This chain is tRNA (guanine-N(7)-)-methyltransferase, found in Leptospira borgpetersenii serovar Hardjo-bovis (strain JB197).